Here is a 912-residue protein sequence, read N- to C-terminus: Nonsense-mediated mRNA decay factor SMG8 (912 aa).

Residues 565-630 (EHSNRTPDAS…GEDEDETLEQ (66 aa)) form a disordered region. Positions 570-602 (TPDASTHPPMTNENSPHLSGSQKSQDSASNLTF) are enriched in polar residues. Residues 604–614 (MDEKRDEENKS) are compositionally biased toward basic and acidic residues.

The protein belongs to the SMG8 family.

In terms of biological role, involved in nonsense-mediated decay (NMD) of mRNAs containing premature stop codons. Probable component of kinase complex containing SMG1 and recruited to stalled ribosomes. The polypeptide is Nonsense-mediated mRNA decay factor SMG8 (Culex quinquefasciatus (Southern house mosquito)).